A 177-amino-acid polypeptide reads, in one-letter code: ATP synthase subunit b, chloroplastic (177 aa).

Residues 22 to 42 traverse the membrane as a helical segment; the sequence is ILETNIINLAAVVGIVVFFVG.

The protein belongs to the ATPase B chain family. In terms of assembly, F-type ATPases have 2 components, F(1) - the catalytic core - and F(0) - the membrane proton channel. F(1) has five subunits: alpha(3), beta(3), gamma(1), delta(1), epsilon(1). F(0) has four main subunits: a(1), b(1), b'(1) and c(10-14). The alpha and beta chains form an alternating ring which encloses part of the gamma chain. F(1) is attached to F(0) by a central stalk formed by the gamma and epsilon chains, while a peripheral stalk is formed by the delta, b and b' chains.

It is found in the plastid. The protein resides in the chloroplast thylakoid membrane. Its function is as follows. F(1)F(0) ATP synthase produces ATP from ADP in the presence of a proton or sodium gradient. F-type ATPases consist of two structural domains, F(1) containing the extramembraneous catalytic core and F(0) containing the membrane proton channel, linked together by a central stalk and a peripheral stalk. During catalysis, ATP synthesis in the catalytic domain of F(1) is coupled via a rotary mechanism of the central stalk subunits to proton translocation. Functionally, component of the F(0) channel, it forms part of the peripheral stalk, linking F(1) to F(0). The polypeptide is ATP synthase subunit b, chloroplastic (Oedogonium cardiacum (Filamentous green alga)).